The primary structure comprises 195 residues: MAVENEGVLLVLSSPSGAGKTTILERLLERSTNLVRSVSMTTRKPRPGEINGKDYFFVTKKEFHELCEAGQMLEYARVFENFYGIPKSFIEQNLSSGISVLLSIDWQGAFHLFELMREKVISVFILPPSMEELRLRLQKRNSDSASEIEHRLAEAQKEMSKRDKYDYVVINDDIDKSVEEISSILDKERLKRSGV.

Positions 7 to 186 (GVLLVLSSPS…SVEEISSILD (180 aa)) constitute a Guanylate kinase-like domain. 14–21 (SPSGAGKT) serves as a coordination point for ATP.

It belongs to the guanylate kinase family.

It is found in the cytoplasm. The enzyme catalyses GMP + ATP = GDP + ADP. Functionally, essential for recycling GMP and indirectly, cGMP. The chain is Guanylate kinase from Wolbachia sp. subsp. Brugia malayi (strain TRS).